The primary structure comprises 448 residues: tRNA modification GTPase MnmE (448 aa).

Positions 24, 81, and 120 each coordinate (6S)-5-formyl-5,6,7,8-tetrahydrofolate. The TrmE-type G domain occupies 216–373 (GLNVVLVGAP…LKRTLLREAG (158 aa)). Asn226 is a K(+) binding site. Residues 226–231 (NVGKSS), 245–251 (TDIAGTT), and 270–273 (DTAG) each bind GTP. Ser230 contributes to the Mg(2+) binding site. The K(+) site is built by Thr245, Ile247, and Thr250. A Mg(2+)-binding site is contributed by Thr251. Position 448 (Lys448) interacts with (6S)-5-formyl-5,6,7,8-tetrahydrofolate.

It belongs to the TRAFAC class TrmE-Era-EngA-EngB-Septin-like GTPase superfamily. TrmE GTPase family. Homodimer. Heterotetramer of two MnmE and two MnmG subunits. K(+) is required as a cofactor.

The protein resides in the cytoplasm. Its function is as follows. Exhibits a very high intrinsic GTPase hydrolysis rate. Involved in the addition of a carboxymethylaminomethyl (cmnm) group at the wobble position (U34) of certain tRNAs, forming tRNA-cmnm(5)s(2)U34. The protein is tRNA modification GTPase MnmE of Neisseria meningitidis serogroup C (strain 053442).